We begin with the raw amino-acid sequence, 534 residues long: Chaperonin GroEL 3 (534 aa).

ATP is bound by residues 31-34, Gly416, 479-481, and Asp495; these read TLGP and NAL.

This sequence belongs to the chaperonin (HSP60) family. Forms a cylinder of 14 subunits composed of two heptameric rings stacked back-to-back. Interacts with the co-chaperonin GroES.

Its subcellular location is the cytoplasm. It carries out the reaction ATP + H2O + a folded polypeptide = ADP + phosphate + an unfolded polypeptide.. In terms of biological role, together with its co-chaperonin GroES, plays an essential role in assisting protein folding. The GroEL-GroES system forms a nano-cage that allows encapsulation of the non-native substrate proteins and provides a physical environment optimized to promote and accelerate protein folding. In Protochlamydia amoebophila (strain UWE25), this protein is Chaperonin GroEL 3.